The following is a 266-amino-acid chain: 5'-nucleotidase SurE (266 aa).

A divalent metal cation is bound by residues Asp-8, Asp-9, Ser-42, and Asn-98.

This sequence belongs to the SurE nucleotidase family. A divalent metal cation serves as cofactor.

It localises to the cytoplasm. It carries out the reaction a ribonucleoside 5'-phosphate + H2O = a ribonucleoside + phosphate. In terms of biological role, nucleotidase that shows phosphatase activity on nucleoside 5'-monophosphates. The polypeptide is 5'-nucleotidase SurE (Methanocaldococcus jannaschii (strain ATCC 43067 / DSM 2661 / JAL-1 / JCM 10045 / NBRC 100440) (Methanococcus jannaschii)).